The chain runs to 319 residues: MSDRKNMKLFALNSNQEIAQKIAQAVGVPLGKLSSRQFSDGEIQVNIEESVRGYDVYIIQSTSFPVNNHLMELLIMVDACVRASAHSINVVLPYFGYARQDRIACPREPLTAKLVANMLVKAGVDRILTLDLHAVQVQGFFDIPVDNLFTVPLFAKHYCDKGLLGSDVVVVSPKNSGVKRARSLAEYLDAPIAIIDYPQDDATRNEGYIIGDVEGKKAILIDDILNTGRTFSEASKIVEREGATEIYAVSSHGLFVEGAAELLDNTNIKEILVTDSVATKEKTPKNVCYITASELIGDAIVRIHERKPVSPLFAYNKKK.

Residues Asp-40–Glu-42 and Arg-99–Gln-100 each bind ATP. His-133 provides a ligand contact to Mg(2+). Residues Asp-222 and Asn-226–Thr-230 each bind D-ribose 5-phosphate.

Belongs to the ribose-phosphate pyrophosphokinase family. Class I subfamily. As to quaternary structure, homohexamer. The cofactor is Mg(2+).

The protein localises to the cytoplasm. The enzyme catalyses D-ribose 5-phosphate + ATP = 5-phospho-alpha-D-ribose 1-diphosphate + AMP + H(+). Its pathway is metabolic intermediate biosynthesis; 5-phospho-alpha-D-ribose 1-diphosphate biosynthesis; 5-phospho-alpha-D-ribose 1-diphosphate from D-ribose 5-phosphate (route I): step 1/1. Involved in the biosynthesis of the central metabolite phospho-alpha-D-ribosyl-1-pyrophosphate (PRPP) via the transfer of pyrophosphoryl group from ATP to 1-hydroxyl of ribose-5-phosphate (Rib-5-P). The polypeptide is Putative ribose-phosphate pyrophosphokinase 2 (Streptococcus pneumoniae serotype 4 (strain ATCC BAA-334 / TIGR4)).